Consider the following 589-residue polypeptide: Putative ABC transporter ATP-binding protein MG015 (589 aa).

6 consecutive transmembrane segments (helical) span residues 9 to 29 (LLYV…NPIL), 66 to 86 (LTIV…FNVA), 161 to 181 (LIFL…ATLI), 251 to 271 (IFLF…SISI), 280 to 300 (IPSF…IASL), and 303 to 323 (ITLA…GVVS). Residues 9-319 (LLYVFLCIVL…IFTLWNLVQL (311 aa)) enclose the ABC transmembrane type-1 domain. The 235-residue stretch at 352–586 (IRFENVAFGY…NGFYARLKQS (235 aa)) folds into the ABC transporter domain. ATP is bound at residue 385–392 (GPTGAGKS).

This sequence belongs to the ABC transporter superfamily.

Its subcellular location is the cell membrane. The sequence is that of Putative ABC transporter ATP-binding protein MG015 from Mycoplasma genitalium (strain ATCC 33530 / DSM 19775 / NCTC 10195 / G37) (Mycoplasmoides genitalium).